A 145-amino-acid chain; its full sequence is LIM domain only protein 3 (145 aa).

LIM zinc-binding domains follow at residues 11–73 (KGCA…LFGV) and 75–137 (GNCA…GLMK).

The protein is LIM domain only protein 3 (LMO3) of Bos taurus (Bovine).